A 298-amino-acid polypeptide reads, in one-letter code: Ribosomal protein L11 methyltransferase (298 aa).

The S-adenosyl-L-methionine site is built by Thr-148, Gly-169, Asp-191, and Asn-233.

Belongs to the methyltransferase superfamily. PrmA family.

It is found in the cytoplasm. The enzyme catalyses L-lysyl-[protein] + 3 S-adenosyl-L-methionine = N(6),N(6),N(6)-trimethyl-L-lysyl-[protein] + 3 S-adenosyl-L-homocysteine + 3 H(+). Functionally, methylates ribosomal protein L11. This Marinobacter nauticus (strain ATCC 700491 / DSM 11845 / VT8) (Marinobacter aquaeolei) protein is Ribosomal protein L11 methyltransferase.